The sequence spans 215 residues: Ribonuclease T (215 aa).

The Exonuclease domain maps to 20–194 (VVIDVETAGF…YDTEQTAQLF (175 aa)). Residues aspartate 23, glutamate 25, histidine 181, and aspartate 186 each coordinate Mg(2+). Residue histidine 181 is the Proton donor/acceptor of the active site.

Belongs to the RNase T family. Homodimer. Requires Mg(2+) as cofactor.

In terms of biological role, trims short 3' overhangs of a variety of RNA species, leaving a one or two nucleotide 3' overhang. Responsible for the end-turnover of tRNA: specifically removes the terminal AMP residue from uncharged tRNA (tRNA-C-C-A). Also appears to be involved in tRNA biosynthesis. The sequence is that of Ribonuclease T from Klebsiella pneumoniae subsp. pneumoniae (strain ATCC 700721 / MGH 78578).